A 114-amino-acid polypeptide reads, in one-letter code: Nucleoid-associated protein PCC8801_2554 (114 aa).

The protein belongs to the YbaB/EbfC family. As to quaternary structure, homodimer.

It is found in the cytoplasm. The protein localises to the nucleoid. Binds to DNA and alters its conformation. May be involved in regulation of gene expression, nucleoid organization and DNA protection. The sequence is that of Nucleoid-associated protein PCC8801_2554 from Rippkaea orientalis (strain PCC 8801 / RF-1) (Cyanothece sp. (strain PCC 8801)).